The following is a 77-amino-acid chain: DinI-like protein in retron Ec67 (77 aa).

It belongs to the DinI family.

The polypeptide is DinI-like protein in retron Ec67 (Escherichia coli).